The following is a 298-amino-acid chain: ATP synthase gamma chain (298 aa).

Belongs to the ATPase gamma chain family. As to quaternary structure, F-type ATPases have 2 components, CF(1) - the catalytic core - and CF(0) - the membrane proton channel. CF(1) has five subunits: alpha(3), beta(3), gamma(1), delta(1), epsilon(1). CF(0) has three main subunits: a, b and c.

Its subcellular location is the cell inner membrane. Produces ATP from ADP in the presence of a proton gradient across the membrane. The gamma chain is believed to be important in regulating ATPase activity and the flow of protons through the CF(0) complex. The protein is ATP synthase gamma chain of Francisella tularensis subsp. tularensis (strain WY96-3418).